We begin with the raw amino-acid sequence, 1233 residues long: Structural maintenance of chromosomes protein 1A (1233 aa).

32–39 (GPNGSGKS) contributes to the ATP binding site. Coiled-coil stretches lie at residues 104–124 (EYKI…LEKL) and 163–503 (ELAQ…KAEI). Over residues 284 to 293 (IKEKDSELNQ) the composition is skewed to basic and acidic residues. Disordered regions lie at residues 284–307 (IKEK…NTSH) and 350–369 (FEER…TLEE). Phosphoserine is present on residues serine 358 and serine 360. One can recognise an SMC hinge domain in the interval 515 to 629 (VYGRLIDLCQ…DNVEDARRIA (115 aa)). Lysine 648 and lysine 713 each carry N6-acetyllysine. A coiled-coil region spans residues 660–935 (KAKARRWDEK…RHNLLQACKM (276 aa)). The disordered stretch occupies residues 946 to 969 (TMDDISQEEGGSQGEESVSGSQRT). The segment covering 953 to 967 (EEGGSQGEESVSGSQ) has biased composition (low complexity). Phosphoserine occurs at positions 957, 962, 966, and 970. Residues 991–1068 (KDAQAEEEIK…FEQIKKERFD (78 aa)) are a coiled coil. At lysine 1037 the chain carries N6-acetyllysine.

Belongs to the SMC family. SMC1 subfamily. As to quaternary structure, forms a heterodimer with SMC3 in cohesin complexes. Cohesin complexes are composed of the SMC1 (SMC1A or meiosis-specific SMC1B) and SMC3 heterodimer attached via their SMC hinge domain, RAD21 which link them, and one STAG protein (STAG1, STAG2 or meiosis-specific STAG3), which interacts with RAD21. In germ cell cohesin complexes, SMC1A is mutually exclusive with SMC1B. Found in a complex with CDCA5, SMC3 and RAD21, PDS5A/SCC-112 and PDS5B/APRIN. Interacts with STAG3, NDC80, BRAC1, BRAT1 and RPGR. Found in a complex containing POLE and SMC3. The cohesin complex interacts with the cohesin loading complex subunits NIPBL/Scc2 (via HEAT repeats) and MAU2/Scc4. NIPBL directly contacts all members of the complex, RAD21, SMC1A/B, SMC3 and STAG1. Interacts with SYCP2. In terms of processing, phosphorylated upon ionizing radiation or DNA methylation. Phosphorylation of Ser-957 and Ser-966 activates it and is required for S-phase checkpoint activation. Ubiquitinated by the DCX(DCAF15) complex, leading to its degradation.

The protein resides in the nucleus. The protein localises to the chromosome. Its function is as follows. Involved in chromosome cohesion during cell cycle and in DNA repair. Central component of cohesin complex. The cohesin complex is required for the cohesion of sister chromatids after DNA replication. The cohesin complex apparently forms a large proteinaceous ring within which sister chromatids can be trapped. At anaphase, the complex is cleaved and dissociates from chromatin, allowing sister chromatids to segregate. The cohesin complex may also play a role in spindle pole assembly during mitosis. Involved in DNA repair via its interaction with BRCA1 and its related phosphorylation by ATM, or via its phosphorylation by ATR. Works as a downstream effector both in the ATM/NBS1 branch and in the ATR/MSH2 branch of S-phase checkpoint. This Rattus norvegicus (Rat) protein is Structural maintenance of chromosomes protein 1A (Smc1a).